Reading from the N-terminus, the 90-residue chain is Probable Fe(2+)-trafficking protein (90 aa).

The protein belongs to the Fe(2+)-trafficking protein family.

Could be a mediator in iron transactions between iron acquisition and iron-requiring processes, such as synthesis and/or repair of Fe-S clusters in biosynthetic enzymes. This is Probable Fe(2+)-trafficking protein from Pseudomonas fluorescens (strain SBW25).